Reading from the N-terminus, the 388-residue chain is MENRSISRTQLRNRNLKLVLQQIINHPATSRIAISHELNLNKSTISSLYNSLSADHFIEELGEGAASNVGGRKPIMARLNKKYGYTITFDLGYRQLHAMANYLDAEIIDYQEIDTKGRPIEAMLDDCRHFVQEMQTQVHAIHGLLGICFSIHGIINDNQIVHSPWIDMHDIDIVKQFKAEFDVPVILENEANLSAIYERDFNAGLDYRNSITLSIHRGIGAGIILDKHLFRGKQGEAGEVGRSLTLLGPNTAGQSVESICSEEAIINRVKRIKQDETTNRQTVVQLYQQHDREVERILSQSCSVIAGLIYNVVTTLNPDAIFINSELLAETPELLGDIQDNYRDIAQDQLPITLTKNTQFATSLGGCSLITHYVLGMVDYELQFKEAD.

The H-T-H motif DNA-binding region spans 31 to 50 (RIAISHELNLNKSTISSLYN).

It belongs to the ROK (NagC/XylR) family.

Functionally, transcriptional repressor of xylose-utilizing enzymes. The chain is Xylose repressor (xylR) from Lactiplantibacillus pentosus (Lactobacillus pentosus).